The primary structure comprises 83 residues: MSQTFTKSQVAEHKDDKSMYIIIDDGVYDITNFLDDHPGGAKILKRMAGKDATKSFWKYHGKSVLEKYGTKLKVGTLAEAAKL.

One can recognise a Cytochrome b5 heme-binding domain in the interval 2–78; that stretch reads SQTFTKSQVA…GTKLKVGTLA (77 aa). 2 residues coordinate heme: His37 and His60.

Belongs to the cytochrome b5 family.

This is Putative cytochrome b5 B11H24.095 from Neurospora crassa (strain ATCC 24698 / 74-OR23-1A / CBS 708.71 / DSM 1257 / FGSC 987).